Reading from the N-terminus, the 164-residue chain is 2-C-methyl-D-erythritol 2,4-cyclodiphosphate synthase (164 aa).

A divalent metal cation-binding residues include Asp-9 and His-11. 4-CDP-2-C-methyl-D-erythritol 2-phosphate-binding positions include 9-11 and 35-36; these read DVH and HS. His-43 lines the a divalent metal cation pocket. 4-CDP-2-C-methyl-D-erythritol 2-phosphate contacts are provided by residues 57-59, 62-66, 133-136, Phe-140, and Arg-143; these read DIG, FPDTD, and TTTE.

This sequence belongs to the IspF family. Homotrimer. It depends on a divalent metal cation as a cofactor.

The catalysed reaction is 4-CDP-2-C-methyl-D-erythritol 2-phosphate = 2-C-methyl-D-erythritol 2,4-cyclic diphosphate + CMP. It functions in the pathway isoprenoid biosynthesis; isopentenyl diphosphate biosynthesis via DXP pathway; isopentenyl diphosphate from 1-deoxy-D-xylulose 5-phosphate: step 4/6. In terms of biological role, involved in the biosynthesis of isopentenyl diphosphate (IPP) and dimethylallyl diphosphate (DMAPP), two major building blocks of isoprenoid compounds. Catalyzes the conversion of 4-diphosphocytidyl-2-C-methyl-D-erythritol 2-phosphate (CDP-ME2P) to 2-C-methyl-D-erythritol 2,4-cyclodiphosphate (ME-CPP) with a corresponding release of cytidine 5-monophosphate (CMP). The chain is 2-C-methyl-D-erythritol 2,4-cyclodiphosphate synthase from Syntrophotalea carbinolica (strain DSM 2380 / NBRC 103641 / GraBd1) (Pelobacter carbinolicus).